Here is a 198-residue protein sequence, read N- to C-terminus: Peroxiredoxin-2 (198 aa).

Position 2 is an N-acetylalanine (alanine 2). The Thioredoxin domain occupies 6 to 164 (AHIGKPAPDF…ALRLVQAFQY (159 aa)). Cysteine 51 (cysteine sulfenic acid (-SOH) intermediate) is an active-site residue. At serine 112 the chain carries Phosphoserine. Residue threonine 182 is modified to Phosphothreonine. An N6-acetyllysine modification is found at lysine 196.

This sequence belongs to the peroxiredoxin family. AhpC/Prx1 subfamily. In terms of assembly, homodimer; disulfide-linked, upon oxidation. 5 homodimers assemble to form a ring-like decamer. Interacts with TIPIN. In terms of processing, the enzyme can be inactivated by further oxidation of the cysteine sulfenic acid (C(P)-SOH) to sulphinic acid (C(P)-SO2H) instead of its condensation to a disulfide bond. It can be reactivated by forming a transient disulfide bond with sulfiredoxin SRXN1, which reduces the cysteine sulfinic acid in an ATP- and Mg-dependent manner. Post-translationally, acetylation increases resistance to transition to high molecular-mass complexes. Deacetylated by HDAC6 which decreases reducing activity.

It is found in the cytoplasm. The catalysed reaction is a hydroperoxide + [thioredoxin]-dithiol = an alcohol + [thioredoxin]-disulfide + H2O. Its function is as follows. Thiol-specific peroxidase that catalyzes the reduction of hydrogen peroxide and organic hydroperoxides to water and alcohols, respectively. Plays a role in cell protection against oxidative stress by detoxifying peroxides and as sensor of hydrogen peroxide-mediated signaling events. Might participate in the signaling cascades of growth factors and tumor necrosis factor-alpha by regulating the intracellular concentrations of H(2)O(2). This is Peroxiredoxin-2 (PRDX2) from Cricetulus griseus (Chinese hamster).